The sequence spans 373 residues: 4-hydroxy-3-methylbut-2-en-1-yl diphosphate synthase (flavodoxin) (373 aa).

C270, C273, C305, and E312 together coordinate [4Fe-4S] cluster.

It belongs to the IspG family. Requires [4Fe-4S] cluster as cofactor.

It carries out the reaction (2E)-4-hydroxy-3-methylbut-2-enyl diphosphate + oxidized [flavodoxin] + H2O + 2 H(+) = 2-C-methyl-D-erythritol 2,4-cyclic diphosphate + reduced [flavodoxin]. It functions in the pathway isoprenoid biosynthesis; isopentenyl diphosphate biosynthesis via DXP pathway; isopentenyl diphosphate from 1-deoxy-D-xylulose 5-phosphate: step 5/6. Converts 2C-methyl-D-erythritol 2,4-cyclodiphosphate (ME-2,4cPP) into 1-hydroxy-2-methyl-2-(E)-butenyl 4-diphosphate. This chain is 4-hydroxy-3-methylbut-2-en-1-yl diphosphate synthase (flavodoxin), found in Pectobacterium atrosepticum (strain SCRI 1043 / ATCC BAA-672) (Erwinia carotovora subsp. atroseptica).